A 309-amino-acid chain; its full sequence is Isoflavone reductase homolog IRL (309 aa).

NADP(+) is bound by residues 12–18, arginine 37, and lysine 46; that span reads GGTGYLG. The active-site Proton acceptor is lysine 134. Residue arginine 138 participates in NADP(+) binding.

This sequence belongs to the NmrA-type oxidoreductase family. Isoflavone reductase subfamily. Monomer.

It is found in the cytoplasm. It participates in alkaloid biosynthesis. Functionally, reductase that may be involved in a late step of alkaloid biosynthesis. This Zea mays (Maize) protein is Isoflavone reductase homolog IRL.